The primary structure comprises 234 residues: DNA repair protein RecO (234 aa).

Belongs to the RecO family.

Functionally, involved in DNA repair and RecF pathway recombination. This is DNA repair protein RecO from Idiomarina loihiensis (strain ATCC BAA-735 / DSM 15497 / L2-TR).